Here is a 225-residue protein sequence, read N- to C-terminus: Phosphoserine phosphatase (225 aa).

At Met-1 the chain carries N-acetylmethionine. Asp-20 serves as the catalytic Nucleophile. Asp-20 and Asp-22 together coordinate Mg(2+). 20-22 (DVD) serves as a coordination point for L-serine. Asp-22 serves as the catalytic Proton donor. Met-52 provides a ligand contact to O-phospho-L-serine. Gly-53 serves as a coordination point for phosphate. L-serine contacts are provided by residues 109–111 (SGG) and Lys-158. O-phospho-L-serine is bound by residues 109-111 (SGG) and Lys-158. Asp-179 provides a ligand contact to Mg(2+). Thr-182 lines the O-phospho-L-serine pocket. Thr-182 contacts phosphate.

It belongs to the HAD-like hydrolase superfamily. SerB family. As to quaternary structure, homodimer. It depends on Mg(2+) as a cofactor.

It localises to the cytoplasm. It is found in the cytosol. It catalyses the reaction O-phospho-L-serine + H2O = L-serine + phosphate. It carries out the reaction O-phospho-D-serine + H2O = D-serine + phosphate. The protein operates within amino-acid biosynthesis; L-serine biosynthesis; L-serine from 3-phospho-D-glycerate: step 3/3. Catalyzes the last irreversible step in the biosynthesis of L-serine from carbohydrates, the dephosphorylation of O-phospho-L-serine to L-serine. L-serine can then be used in protein synthesis, to produce other amino acids, in nucleotide metabolism or in glutathione synthesis, or can be racemized to D-serine, a neuromodulator. May also act on O-phospho-D-serine. The protein is Phosphoserine phosphatase of Rattus norvegicus (Rat).